Reading from the N-terminus, the 210-residue chain is Peptidyl-tRNA hydrolase (210 aa).

Tyrosine 30 provides a ligand contact to tRNA. Histidine 35 (proton acceptor) is an active-site residue. The tRNA site is built by tyrosine 81, asparagine 83, and asparagine 129.

Belongs to the PTH family. In terms of assembly, monomer.

Its subcellular location is the cytoplasm. It catalyses the reaction an N-acyl-L-alpha-aminoacyl-tRNA + H2O = an N-acyl-L-amino acid + a tRNA + H(+). Hydrolyzes ribosome-free peptidyl-tRNAs (with 1 or more amino acids incorporated), which drop off the ribosome during protein synthesis, or as a result of ribosome stalling. Functionally, catalyzes the release of premature peptidyl moieties from peptidyl-tRNA molecules trapped in stalled 50S ribosomal subunits, and thus maintains levels of free tRNAs and 50S ribosomes. This Bordetella petrii (strain ATCC BAA-461 / DSM 12804 / CCUG 43448) protein is Peptidyl-tRNA hydrolase.